Here is a 355-residue protein sequence, read N- to C-terminus: Probable aldo-keto reductase 3 (355 aa).

Catalysis depends on tyrosine 70, which acts as the Proton donor. Histidine 138 serves as a coordination point for substrate. 217-227 (SPLGRGFFSSG) is a binding site for NADP(+).

It belongs to the aldo/keto reductase family.

This chain is Probable aldo-keto reductase 3, found in Oryza sativa subsp. indica (Rice).